A 949-amino-acid polypeptide reads, in one-letter code: AP-1 complex subunit beta-1 (949 aa).

Position 318 is an N6-acetyllysine (K318). Residue Y574 is modified to 3'-nitrotyrosine. A disordered region spans residues 592-623 (SLPPRTASSESTESPEAAPAGAPASDQPDVIP). Positions 594–616 (PPRTASSESTESPEAAPAGAPAS) are enriched in low complexity.

The protein belongs to the adaptor complexes large subunit family. As to quaternary structure, adaptor protein complex 1 (AP-1) is a heterotetramer composed of two large adaptins (gamma-type subunit AP1G1 and beta-type subunit AP1B1), a medium adaptin (mu-type subunit AP1M1 or AP1M2) and a small adaptin (sigma-type subunit AP1S1 or AP1S2 or AP1S3). In terms of processing, the N-terminus is blocked.

It is found in the golgi apparatus. The protein localises to the cytoplasmic vesicle. The protein resides in the clathrin-coated vesicle membrane. Its function is as follows. Subunit of clathrin-associated adaptor protein complex 1 that plays a role in protein sorting in the late-Golgi/trans-Golgi network (TGN) and/or endosomes. The AP complexes mediate both the recruitment of clathrin to membranes and the recognition of sorting signals within the cytosolic tails of transmembrane cargo molecules. This Rattus norvegicus (Rat) protein is AP-1 complex subunit beta-1 (Ap1b1).